Here is a 229-residue protein sequence, read N- to C-terminus: Putative N-acetylmannosamine-6-phosphate 2-epimerase (229 aa).

Belongs to the NanE family.

The enzyme catalyses an N-acyl-D-glucosamine 6-phosphate = an N-acyl-D-mannosamine 6-phosphate. It functions in the pathway amino-sugar metabolism; N-acetylneuraminate degradation; D-fructose 6-phosphate from N-acetylneuraminate: step 3/5. Converts N-acetylmannosamine-6-phosphate (ManNAc-6-P) to N-acetylglucosamine-6-phosphate (GlcNAc-6-P). This Pediococcus pentosaceus (strain ATCC 25745 / CCUG 21536 / LMG 10740 / 183-1w) protein is Putative N-acetylmannosamine-6-phosphate 2-epimerase.